A 498-amino-acid chain; its full sequence is Probable cytosol aminopeptidase (498 aa).

Mn(2+) contacts are provided by Lys271 and Asp276. Residue Lys283 is part of the active site. The Mn(2+) site is built by Asp294, Asp353, and Glu355. The active site involves Arg357.

This sequence belongs to the peptidase M17 family. Requires Mn(2+) as cofactor.

It is found in the cytoplasm. It carries out the reaction Release of an N-terminal amino acid, Xaa-|-Yaa-, in which Xaa is preferably Leu, but may be other amino acids including Pro although not Arg or Lys, and Yaa may be Pro. Amino acid amides and methyl esters are also readily hydrolyzed, but rates on arylamides are exceedingly low.. It catalyses the reaction Release of an N-terminal amino acid, preferentially leucine, but not glutamic or aspartic acids.. Functionally, presumably involved in the processing and regular turnover of intracellular proteins. Catalyzes the removal of unsubstituted N-terminal amino acids from various peptides. The sequence is that of Probable cytosol aminopeptidase from Bordetella petrii (strain ATCC BAA-461 / DSM 12804 / CCUG 43448).